Consider the following 613-residue polypeptide: Zinc metalloproteinase-disintegrin-like EoVMP2 (613 aa).

The N-terminal stretch at 1–20 is a signal peptide; sequence MMQVLLVTICLAVFPYQGSS. Positions 21-194 are excised as a propeptide; the sequence is IILESGNVND…EASQLFATSE (174 aa). At Gln-195 the chain carries Pyrrolidone carboxylic acid. The Peptidase M12B domain occupies 201–397; that stretch reads RYIEFFIVVD…RNPKCMINKP (197 aa). Glu-204 contributes to the Ca(2+) binding site. Asn-219 carries an N-linked (GlcNAc...) asparagine glycan. Asp-288 serves as a coordination point for Ca(2+). 3 disulfide bridges follow: Cys-312–Cys-392, Cys-352–Cys-376, and Cys-354–Cys-359. Residue His-337 coordinates Zn(2+). Glu-338 is an active-site residue. His-341 and His-347 together coordinate Zn(2+). Residue Asn-375 is glycosylated (N-linked (GlcNAc...) asparagine). Ca(2+)-binding residues include Cys-392, Asn-395, Val-407, Asn-410, Leu-412, Glu-414, Glu-417, and Asp-420. The Disintegrin domain occupies 405-491; it reads PPVCGNGLLE…DCPIDGFHAN (87 aa). Cystine bridges form between Cys-408–Cys-437, Cys-419–Cys-432, Cys-421–Cys-427, Cys-431–Cys-454, Cys-445–Cys-451, Cys-450–Cys-476, Cys-463–Cys-483, Cys-470–Cys-502, Cys-495–Cys-507, Cys-514–Cys-564, Cys-529–Cys-575, Cys-542–Cys-552, Cys-559–Cys-601, and Cys-595–Cys-606. The D/ECD-tripeptide signature appears at 469–471; it reads DCD.

It belongs to the venom metalloproteinase (M12B) family. P-III subfamily. P-IIIa sub-subfamily. Monomer. The cofactor is Zn(2+). Expressed by the venom gland.

It localises to the secreted. Its function is as follows. Snake venom zinc metalloprotease that possesses high hemorrhagic activity. It inhibits collagen-induced platelet aggregation and activates prothrombin (F2). The protein is Zinc metalloproteinase-disintegrin-like EoVMP2 (Svmp3-Eoc22) of Echis ocellatus (Ocellated saw-scaled viper).